We begin with the raw amino-acid sequence, 400 residues long: MTTFGTIEQAMAEILAGRPVVVVDDANRENEGDLIFAAELATPELVAFMVRYTSGYICASLTEDDCDRLDLPPMHHTNQDRRGTAYMVTVDARKGVSTGISAADRARVIRLLADPSTTPDDLARPGHVVPLRAREGGVLRRTGHTEAATDLTRLAGLRPAGVLCELVNDDGTMMRVPDLERFCAEHSLVLVTIADLVMYRRRTEKQVELVAEARLPTRHGDFRVAGYRGDYDSAEHVALVMGDLGDGRDVLVRAHSECLTGDVFGSLRCDCGLQLDTAMELVAKEGRGVVLYIRGHEGRGIGLLHKLRAYQLQDKGRDTVEANLELGLPVDARDYGTGAQVLYDLGVRSMRLLTNNPAKRAGLEGYGLTVTERVALPVQSHPENERYLRTKRDRMGHLLG.

A DHBP synthase region spans residues 1–202 (MTTFGTIEQA…IADLVMYRRR (202 aa)). D-ribulose 5-phosphate is bound by residues 28-29 (RE), D33, 141-145 (RTGHT), and E165. E29 contributes to the Mg(2+) binding site. H144 contacts Mg(2+). Residues 203–400 (TEKQVELVAE…KRDRMGHLLG (198 aa)) are GTP cyclohydrolase II. GTP is bound at residue 253–257 (RAHSE). Residues C258, C269, and C271 each coordinate Zn(2+). Residues Q274, 297–299 (EGR), and T319 contribute to the GTP site. D331 (proton acceptor; for GTP cyclohydrolase activity) is an active-site residue. R333 acts as the Nucleophile; for GTP cyclohydrolase activity in catalysis. Residues T354 and K359 each coordinate GTP.

It in the N-terminal section; belongs to the DHBP synthase family. This sequence in the C-terminal section; belongs to the GTP cyclohydrolase II family. Mg(2+) is required as a cofactor. It depends on Mn(2+) as a cofactor. Requires Zn(2+) as cofactor.

It carries out the reaction D-ribulose 5-phosphate = (2S)-2-hydroxy-3-oxobutyl phosphate + formate + H(+). It catalyses the reaction GTP + 4 H2O = 2,5-diamino-6-hydroxy-4-(5-phosphoribosylamino)-pyrimidine + formate + 2 phosphate + 3 H(+). It functions in the pathway cofactor biosynthesis; riboflavin biosynthesis; 2-hydroxy-3-oxobutyl phosphate from D-ribulose 5-phosphate: step 1/1. Its pathway is cofactor biosynthesis; riboflavin biosynthesis; 5-amino-6-(D-ribitylamino)uracil from GTP: step 1/4. In terms of biological role, catalyzes the conversion of D-ribulose 5-phosphate to formate and 3,4-dihydroxy-2-butanone 4-phosphate. Catalyzes the conversion of GTP to 2,5-diamino-6-ribosylamino-4(3H)-pyrimidinone 5'-phosphate (DARP), formate and pyrophosphate. The polypeptide is Riboflavin biosynthesis protein RibBA (Salinispora tropica (strain ATCC BAA-916 / DSM 44818 / JCM 13857 / NBRC 105044 / CNB-440)).